The primary structure comprises 235 residues: tRNA (guanine-N(1)-)-methyltransferase (235 aa).

Residues G112 and 132–137 (IGDYVI) each bind S-adenosyl-L-methionine.

The protein belongs to the RNA methyltransferase TrmD family. In terms of assembly, homodimer.

The protein localises to the cytoplasm. It carries out the reaction guanosine(37) in tRNA + S-adenosyl-L-methionine = N(1)-methylguanosine(37) in tRNA + S-adenosyl-L-homocysteine + H(+). Its function is as follows. Specifically methylates guanosine-37 in various tRNAs. In Anaplasma marginale (strain St. Maries), this protein is tRNA (guanine-N(1)-)-methyltransferase.